A 237-amino-acid chain; its full sequence is MNIFDRKINFDALLKFSHITPSTQQHLKKVYASFALCMFVAAAGAYVHVVTHFIQAGLLSALGSLALMIWLMATPHSHETEQKRLGLLAGFAFLTGVGLGPALELCIAVNPSILPTAFMGTAMIFTCFSLSALYARRRSYLFLGGILMSAMSLMLLSSLGNLFFGSIWLFQANLYLGLLVMCGFVLFDTQLIIEKAEHGDKDYIWHCVDLFLDFVTLFRKLMLILAFNEKDKKKEKK.

At 1 to 29 (MNIFDRKINFDALLKFSHITPSTQQHLKK) the chain is on the cytoplasmic side. A Glycyl lysine isopeptide (Lys-Gly) (interchain with G-Cter in ubiquitin) cross-link involves residue K7. The chain crosses the membrane as a helical span at residues 30 to 50 (VYASFALCMFVAAAGAYVHVV). The Lumenal portion of the chain corresponds to 51-52 (TH). Residues 53 to 73 (FIQAGLLSALGSLALMIWLMA) traverse the membrane as a helical segment. Over 74 to 86 (TPHSHETEQKRLG) the chain is Cytoplasmic. A helical transmembrane segment spans residues 87–107 (LLAGFAFLTGVGLGPALELCI). The Lumenal portion of the chain corresponds to 108 to 112 (AVNPS). Residues 113–133 (ILPTAFMGTAMIFTCFSLSAL) form a helical membrane-spanning segment. The Cytoplasmic portion of the chain corresponds to 134 to 139 (YARRRS). Residues 140 to 160 (YLFLGGILMSAMSLMLLSSLG) form a helical membrane-spanning segment. The Lumenal portion of the chain corresponds to 161 to 166 (NLFFGS). The chain crosses the membrane as a helical span at residues 167–187 (IWLFQANLYLGLLVMCGFVLF). Topologically, residues 188 to 206 (DTQLIIEKAEHGDKDYIWH) are cytoplasmic. Residues 207–227 (CVDLFLDFVTLFRKLMLILAF) constitute an intramembrane region (helical). At 228 to 237 (NEKDKKKEKK) the chain is on the cytoplasmic side.

It belongs to the BI1 family. In terms of assembly, interacts with BCL2. Interacts with BCL2L1. Interacts with ERN1. Post-translationally, ubiquitinated by BFAR, leading to proteasomal degradation. In terms of tissue distribution, highly abundant in adult testis.

It is found in the endoplasmic reticulum membrane. Its function is as follows. Endoplasmic reticulum (ER)-resident protein that confers cellular protection as an anti-apoptotic protein by limiting multiple stress-inducing pathways surrounding the endoplasmic reticulum and mitochondria. Inhibits the activities of the key sensor for the endoplasmic reticulum unfolded protein response IRE1alpha/ERN1 both directly and by blocking BAX/BAK binding. Modulates ER calcium homeostasis by acting as a calcium-leak channel. Negatively regulates autophagy and autophagosome formation, especially during periods of nutrient deprivation, and reduces cell survival during starvation. The chain is Bax inhibitor 1 (Tmbim6) from Mus musculus (Mouse).